A 149-amino-acid chain; its full sequence is Large ribosomal subunit protein bL9 (149 aa).

The protein belongs to the bacterial ribosomal protein bL9 family.

In terms of biological role, binds to the 23S rRNA. This is Large ribosomal subunit protein bL9 from Acidothermus cellulolyticus (strain ATCC 43068 / DSM 8971 / 11B).